Here is an 85-residue protein sequence, read N- to C-terminus: U4-theraphotoxin-Hhn1p (85 aa).

The N-terminal stretch at 1-22 (MKMTLIAIPTCAAVLVLHTTAA) is a signal peptide. The propeptide occupies 23–48 (EELEAESQLMEVGMPDTELEAVDGER). Cystine bridges form between Cys-52–Cys-66, Cys-56–Cys-77, and Cys-71–Cys-82.

Belongs to the neurotoxin 12 (Hwtx-2) family. 02 (Hwtx-2) subfamily. In terms of tissue distribution, expressed by the venom gland.

It localises to the secreted. Functionally, postsynaptic neurotoxin. The protein is U4-theraphotoxin-Hhn1p of Cyriopagopus hainanus (Chinese bird spider).